The following is a 237-amino-acid chain: Pyridoxine 5'-phosphate synthase (237 aa).

The 3-amino-2-oxopropyl phosphate site is built by Asn7 and Arg18. His43 serves as the catalytic Proton acceptor. 1-deoxy-D-xylulose 5-phosphate is bound by residues Arg45 and His50. The active-site Proton acceptor is Glu70. Thr100 serves as a coordination point for 1-deoxy-D-xylulose 5-phosphate. His190 serves as the catalytic Proton donor. 3-amino-2-oxopropyl phosphate is bound by residues Asp191 and 213-214 (GH).

It belongs to the PNP synthase family. In terms of assembly, homooctamer; tetramer of dimers.

It localises to the cytoplasm. The catalysed reaction is 3-amino-2-oxopropyl phosphate + 1-deoxy-D-xylulose 5-phosphate = pyridoxine 5'-phosphate + phosphate + 2 H2O + H(+). Its pathway is cofactor biosynthesis; pyridoxine 5'-phosphate biosynthesis; pyridoxine 5'-phosphate from D-erythrose 4-phosphate: step 5/5. Functionally, catalyzes the complicated ring closure reaction between the two acyclic compounds 1-deoxy-D-xylulose-5-phosphate (DXP) and 3-amino-2-oxopropyl phosphate (1-amino-acetone-3-phosphate or AAP) to form pyridoxine 5'-phosphate (PNP) and inorganic phosphate. The chain is Pyridoxine 5'-phosphate synthase from Flavobacterium johnsoniae (strain ATCC 17061 / DSM 2064 / JCM 8514 / BCRC 14874 / CCUG 350202 / NBRC 14942 / NCIMB 11054 / UW101) (Cytophaga johnsonae).